Consider the following 128-residue polypeptide: Ribosome-binding factor A (128 aa).

This sequence belongs to the RbfA family. Monomer. Binds 30S ribosomal subunits, but not 50S ribosomal subunits or 70S ribosomes.

Its subcellular location is the cytoplasm. Its function is as follows. One of several proteins that assist in the late maturation steps of the functional core of the 30S ribosomal subunit. Associates with free 30S ribosomal subunits (but not with 30S subunits that are part of 70S ribosomes or polysomes). Required for efficient processing of 16S rRNA. May interact with the 5'-terminal helix region of 16S rRNA. The protein is Ribosome-binding factor A of Rickettsia prowazekii (strain Madrid E).